Consider the following 71-residue polypeptide: Exodeoxyribonuclease 7 small subunit (71 aa).

It belongs to the XseB family. In terms of assembly, heterooligomer composed of large and small subunits.

Its subcellular location is the cytoplasm. It catalyses the reaction Exonucleolytic cleavage in either 5'- to 3'- or 3'- to 5'-direction to yield nucleoside 5'-phosphates.. Its function is as follows. Bidirectionally degrades single-stranded DNA into large acid-insoluble oligonucleotides, which are then degraded further into small acid-soluble oligonucleotides. The polypeptide is Exodeoxyribonuclease 7 small subunit (Endomicrobium trichonymphae).